We begin with the raw amino-acid sequence, 116 residues long: Large ribosomal subunit protein bL19 (116 aa).

Belongs to the bacterial ribosomal protein bL19 family.

This protein is located at the 30S-50S ribosomal subunit interface and may play a role in the structure and function of the aminoacyl-tRNA binding site. The polypeptide is Large ribosomal subunit protein bL19 (Pseudomonas putida (strain ATCC 700007 / DSM 6899 / JCM 31910 / BCRC 17059 / LMG 24140 / F1)).